The primary structure comprises 203 residues: Small ribosomal subunit protein uS3 (203 aa).

Belongs to the universal ribosomal protein uS3 family. In terms of assembly, part of the 30S ribosomal subunit. Forms a tight complex with proteins S10 and S14.

Its function is as follows. Binds the lower part of the 30S subunit head. Binds mRNA in the 70S ribosome, positioning it for translation. This Carsonella ruddii (strain PV) protein is Small ribosomal subunit protein uS3.